Here is a 59-residue protein sequence, read N- to C-terminus: uncharacterized protein (59 aa).

This is an uncharacterized protein from Treponema pallidum (strain Nichols).